A 278-amino-acid chain; its full sequence is Biotin synthase (278 aa).

A Radical SAM core domain is found at 1 to 227 (MQIMLCAISN…QSVVMVAGGR (227 aa)). Residues C16, C20, and C23 each contribute to the [4Fe-4S] cluster site. [2Fe-2S] cluster is bound by residues C60, N96, and C154.

Belongs to the radical SAM superfamily. Biotin synthase family. Homodimer. [4Fe-4S] cluster serves as cofactor. Requires [2Fe-2S] cluster as cofactor.

It carries out the reaction (4R,5S)-dethiobiotin + (sulfur carrier)-SH + 2 reduced [2Fe-2S]-[ferredoxin] + 2 S-adenosyl-L-methionine = (sulfur carrier)-H + biotin + 2 5'-deoxyadenosine + 2 L-methionine + 2 oxidized [2Fe-2S]-[ferredoxin]. It participates in cofactor biosynthesis; biotin biosynthesis; biotin from 7,8-diaminononanoate: step 2/2. Functionally, catalyzes the conversion of dethiobiotin (DTB) to biotin by the insertion of a sulfur atom into dethiobiotin via a radical-based mechanism. The chain is Biotin synthase from Campylobacter jejuni subsp. jejuni serotype O:2 (strain ATCC 700819 / NCTC 11168).